A 71-amino-acid chain; its full sequence is uncharacterized protein (71 aa).

Residues 1 to 16 lie on the Cytoplasmic side of the membrane; the sequence is MLLLYTVMILTCIIYK. A helical membrane pass occupies residues 17-38; the sequence is LVPDNKYWPIHMFFFIMIYIVY. At 39 to 69 the chain is on the extracellular side; that stretch reads MYEKLDIHEKSQFWNYTMARLSGHPVPTIIC. N-linked (GlcNAc...) asparagine; by host glycosylation occurs at Asn53.

It belongs to the asfivirus X69R family.

It is found in the host membrane. This is an uncharacterized protein from African swine fever virus (isolate Pig/Kenya/KEN-50/1950) (ASFV).